A 540-amino-acid chain; its full sequence is Chaperonin GroEL (540 aa).

ATP is bound by residues Thr29–Pro32, Asp86–Thr90, Gly413, Asn476–Ala478, and Asp492.

Belongs to the chaperonin (HSP60) family. In terms of assembly, forms a cylinder of 14 subunits composed of two heptameric rings stacked back-to-back. Interacts with the co-chaperonin GroES.

It is found in the cytoplasm. It carries out the reaction ATP + H2O + a folded polypeptide = ADP + phosphate + an unfolded polypeptide.. Functionally, together with its co-chaperonin GroES, plays an essential role in assisting protein folding. The GroEL-GroES system forms a nano-cage that allows encapsulation of the non-native substrate proteins and provides a physical environment optimized to promote and accelerate protein folding. The protein is Chaperonin GroEL of Staphylococcus saprophyticus subsp. saprophyticus (strain ATCC 15305 / DSM 20229 / NCIMB 8711 / NCTC 7292 / S-41).